The sequence spans 835 residues: Protein translocase subunit SecA (835 aa).

ATP contacts are provided by residues Q85, 103–107 (GEGKT), and D492. C819, C821, C830, and C831 together coordinate Zn(2+).

This sequence belongs to the SecA family. Monomer and homodimer. Part of the essential Sec protein translocation apparatus which comprises SecA, SecYEG and auxiliary proteins SecDF. Other proteins may also be involved. Zn(2+) is required as a cofactor.

Its subcellular location is the cell membrane. It is found in the cytoplasm. It carries out the reaction ATP + H2O + cellular proteinSide 1 = ADP + phosphate + cellular proteinSide 2.. Its function is as follows. Part of the Sec protein translocase complex. Interacts with the SecYEG preprotein conducting channel. Has a central role in coupling the hydrolysis of ATP to the transfer of proteins into and across the cell membrane, serving as an ATP-driven molecular motor driving the stepwise translocation of polypeptide chains across the membrane. In Clostridium botulinum (strain ATCC 19397 / Type A), this protein is Protein translocase subunit SecA.